Reading from the N-terminus, the 707-residue chain is Pheromone-processing carboxypeptidase KEX1 (707 aa).

Residues methionine 1–alanine 17 form the signal peptide. Residues isoleucine 18–arginine 564 are Lumenal-facing. N-linked (GlcNAc...) asparagine glycans are attached at residues asparagine 64 and asparagine 121. The active site involves serine 183. Asparagine 293 and asparagine 378 each carry an N-linked (GlcNAc...) asparagine glycan. The active site involves aspartate 393. 2 N-linked (GlcNAc...) asparagine glycosylation sites follow: asparagine 440 and asparagine 448. Histidine 451 is a catalytic residue. A disordered region spans residues glycine 496 to serine 557. Basic and acidic residues predominate over residues glutamate 503–aspartate 533. Low complexity predominate over residues serine 536–serine 549. A helical membrane pass occupies residues leucine 565 to tyrosine 585. The Cytoplasmic segment spans residues arginine 586–serine 707. The tract at residues asparagine 644–serine 707 is disordered. Positions serine 683 to glutamate 694 are enriched in acidic residues. Residues threonine 695 to serine 707 are compositionally biased toward basic and acidic residues.

This sequence belongs to the peptidase S10 family.

It localises to the golgi apparatus. The protein resides in the trans-Golgi network membrane. It catalyses the reaction Preferential release of a C-terminal arginine or lysine residue.. Its function is as follows. Protease with a carboxypeptidase B-like function involved in the C-terminal processing of the lysine and arginine residues from protein precursors. Promotes cell fusion and is involved in the programmed cell death. The chain is Pheromone-processing carboxypeptidase KEX1 (KEX1) from Candida tropicalis (strain ATCC MYA-3404 / T1) (Yeast).